We begin with the raw amino-acid sequence, 128 residues long: NADH dehydrogenase [ubiquinone] 1 beta subcomplex subunit 6 (128 aa).

At S2 the chain carries N-acetylserine. K24 is modified (N6-acetyllysine). Residues 64–86 (TYRHSIFAFTHVLIPVWIIHYYL) form a helical membrane-spanning segment.

Belongs to the complex I NDUFB6 subunit family. As to quaternary structure, complex I is composed of 45 different subunits.

It is found in the mitochondrion inner membrane. Functionally, accessory subunit of the mitochondrial membrane respiratory chain NADH dehydrogenase (Complex I), that is believed not to be involved in catalysis. Complex I functions in the transfer of electrons from NADH to the respiratory chain. The immediate electron acceptor for the enzyme is believed to be ubiquinone. This Bos taurus (Bovine) protein is NADH dehydrogenase [ubiquinone] 1 beta subcomplex subunit 6 (NDUFB6).